Here is a 428-residue protein sequence, read N- to C-terminus: Immunoglobulin superfamily containing leucine-rich repeat protein (428 aa).

The N-terminal stretch at 1–18 is a signal peptide; it reads MQELRLLCLVVLVGLAQA. The region spanning 19–50 is the LRRNT domain; the sequence is CPEPCECGEKYGFHIADCAYRDLQAVPSGFPA. N51 is a glycosylation site (N-linked (GlcNAc...) asparagine). LRR repeat units lie at residues 51-72, 75-96, 99-122, 123-144, and 147-168; these read NVTT…AFRE, RLQS…ALAS, QLKS…HSLS, ALQL…AFRS, and ALRS…TFAP. In terms of domain architecture, LRRCT spans 180–231; the sequence is NPFDCTCGIVWFKTWALTTAVSIPEQDNITCTSPHVLKGTRLNRLLPLPCSA. In terms of domain architecture, Ig-like spans 232 to 343; it reads PSVQLTYQPS…GSAESSVNVA (112 aa). Cysteines 257 and 327 form a disulfide. N309 is a glycosylation site (N-linked (GlcNAc...) asparagine).

The protein resides in the secreted. This chain is Immunoglobulin superfamily containing leucine-rich repeat protein (ISLR), found in Bos taurus (Bovine).